Consider the following 549-residue polypeptide: Efflux pump patC (549 aa).

Over residues 1–12 the composition is skewed to polar residues; it reads MAESTAHTSPSL. The interval 1–40 is disordered; sequence MAESTAHTSPSLNDKEREVDQGILSDESGPAEEVKETPDQ. 14 helical membrane-spanning segments follow: residues 50–70, 85–105, 116–136, 146–166, 178–198, 206–226, 252–272, 282–302, 321–341, 360–380, 385–405, 419–439, 460–482, and 526–546; these read LLICIAVFSANLLYGLDNTIV, AQLGWLGVGFTLGSVVFILPL, WLFIGCLTMFAAGSALCGGAP, VWAGAGGAGMYLGNLNLITIL, LVGLIYGVGCILGPIIGGAFA, WGFYINLIIFGIMAPIYVFLL, VLSAGMHVSFILFIVFGGVMW, LYVVAAVTLIAFALSQYFCVL, IALYVLMACGGAALFVAVYYI, LLPFICFYVATILLCGWLMPK, VLWYLLSGIFMVIGSATMYTV, ILLGLGMATTQAAYAVGPSLV, LLGLAIASAIFQSETLSGLNALL, and VYVMAIAAGALYVIASCFLPW.

The protein belongs to the major facilitator superfamily. TCR/Tet family.

Its subcellular location is the vacuole membrane. It localises to the cell membrane. Efflux pump; part of the gene cluster that mediates the biosynthesis of patulin, an acetate-derived tetraketide mycotoxin produced by several fungal species that shows antimicrobial properties against several bacteria. May be involved in the secretion of E-ascladiol to be converted to patulin by the secreted patulin synthase patE. This Aspergillus clavatus (strain ATCC 1007 / CBS 513.65 / DSM 816 / NCTC 3887 / NRRL 1 / QM 1276 / 107) protein is Efflux pump patC.